The following is a 190-amino-acid chain: Nucleoside triphosphate pyrophosphatase (190 aa).

D69 functions as the Proton acceptor in the catalytic mechanism.

This sequence belongs to the Maf family. It depends on a divalent metal cation as a cofactor.

The protein localises to the cytoplasm. The catalysed reaction is a ribonucleoside 5'-triphosphate + H2O = a ribonucleoside 5'-phosphate + diphosphate + H(+). It catalyses the reaction a 2'-deoxyribonucleoside 5'-triphosphate + H2O = a 2'-deoxyribonucleoside 5'-phosphate + diphosphate + H(+). Functionally, nucleoside triphosphate pyrophosphatase. May have a dual role in cell division arrest and in preventing the incorporation of modified nucleotides into cellular nucleic acids. This chain is Nucleoside triphosphate pyrophosphatase, found in Helicobacter pylori (strain G27).